We begin with the raw amino-acid sequence, 319 residues long: Mitochondrial thiamine pyrophosphate carrier 1 (319 aa).

Solcar repeat units lie at residues 12–110 (GQRY…VTQS), 121–207 (PQPA…VRVP), and 214–309 (PFGS…VLKI). 6 consecutive transmembrane segments (helical) span residues 17-35 (VVAA…VAPL), 91-107 (LLYI…YRTV), 127-147 (FVSG…FDLL), 182-201 (GVSA…FATY), 221-237 (TAGV…VFPL), and 284-301 (GLTV…VTMW).

This sequence belongs to the mitochondrial carrier (TC 2.A.29) family.

The protein resides in the mitochondrion inner membrane. Its function is as follows. Mitochondrial transporter that mediates uptake of thiamine pyrophosphate (ThPP) into mitochondria. In Coccidioides immitis (strain RS) (Valley fever fungus), this protein is Mitochondrial thiamine pyrophosphate carrier 1 (TPC1).